Reading from the N-terminus, the 415-residue chain is AP-3 complex subunit mu (415 aa).

The MHD domain occupies 178–414; the sequence is SNEVYVDLVE…QTRAGEFDVR (237 aa).

This sequence belongs to the adaptor complexes medium subunit family. Adaptor protein complex 3 (AP-3) is a heterotetramer composed of two large adaptins (delta-type subunit and beta-type subunit), a medium adaptin (mu-type subunit) and a small adaptin (sigma-type subunit).

It is found in the cytoplasm. It localises to the golgi apparatus. Its subcellular location is the cytoplasmic vesicle membrane. In terms of biological role, part of the AP-3 complex, an adaptor-related complex which seems to be clathrin-associated. The complex is associated with the Golgi region as well as more peripheral structures. It facilitates the budding of vesicles from the Golgi membrane and may be directly involved in trafficking to the vacuole. It also functions in maintaining the identity of lytic vacuoles and in regulating the transition between storage and lytic vacuoles. This Arabidopsis thaliana (Mouse-ear cress) protein is AP-3 complex subunit mu (AP3M).